Consider the following 418-residue polypeptide: Deubiquitinase and deneddylase Dub1 (418 aa).

A compositionally biased stretch (polar residues) spans 1–10 (MLSPTNSISK). Residues 1–23 (MLSPTNSISKTVPAPPQDSSKPV) form a disordered region. A helical membrane pass occupies residues 40 to 60 (TALAVLLVVVTLGLILLFYSF). The segment at 75 to 145 (STKEHPTISI…LPPKAPKPVK (71 aa)) is disordered. Residues 86–141 (EPLPSPPLAVPRPSTPPPPVISRPSTPPAPTPAISPPSTPSAPKPSTPPPLPPKAP) show a composition bias toward pro residues. Residues His-288, Asp-305, and Cys-358 contribute to the active site.

The protein belongs to the peptidase C48 family.

The protein localises to the secreted. The protein resides in the host cell. It localises to the membrane. In terms of biological role, effector proteins function to alter host cell physiology and promote bacterial survival in host tissues. This protease possesses deubiquitinating and deneddylating activities. The sequence is that of Deubiquitinase and deneddylase Dub1 (cdu1) from Chlamydia trachomatis serovar A (strain ATCC VR-571B / DSM 19440 / HAR-13).